We begin with the raw amino-acid sequence, 522 residues long: BTB/POZ domain-containing protein 16 (522 aa).

The BTB domain occupies 166-222 (INDPAVTRVAFALALKNLYMKEVEMTVDNVLGVLASAHILQFNRLFQKCVNMMMNRL).

The sequence is that of BTB/POZ domain-containing protein 16 (Btbd16) from Mus musculus (Mouse).